Reading from the N-terminus, the 721-residue chain is Vacuolar transporter chaperone complex subunit 4 (721 aa).

Positions 1–146 (MKFGQLLKET…GWILKPVFAA (146 aa)) constitute an SPX domain. Residues 1-631 (MKFGQLLKET…KTYFALERTY (631 aa)) lie on the Cytoplasmic side of the membrane. Residues Lys198, Arg262, Arg264, Lys279, Lys292, Tyr357, and Arg359 each contribute to the ATP site. Residue Glu421 coordinates Mn(2+). Lys453 is a catalytic residue. Composition is skewed to polar residues over residues 490–513 (QGRSQSGTHSSSVSANVLTDSENT) and 529–547 (IGSSSTRNDNSTFQTSDSF). A disordered region spans residues 490–547 (QGRSQSGTHSSSVSANVLTDSENTPIHADGDNYVDEESRIGSSSTRNDNSTFQTSDSF). The residue at position 495 (Ser495) is a Phosphoserine. A Phosphothreonine modification is found at Thr497. Ser501 carries the phosphoserine modification. Phosphothreonine is present on Thr534. At Ser546 the chain carries Phosphoserine. A helical transmembrane segment spans residues 632-652 (LDYLRYSILMGSIGITLFSFA). At 653–657 (KTRSG) the chain is on the vacuolar side. The chain crosses the membrane as a helical span at residues 658–678 (ILGAASFTLVALFAIFYSTFL). The Cytoplasmic portion of the chain corresponds to 679–697 (YLWRAVNIAKHNAVRYDDR). Residues 698–718 (FGPTAICVITFAAISANVILN) traverse the membrane as a helical segment. At 719–721 (FNA) the chain is on the vacuolar side.

This sequence belongs to the VTC4 family. In terms of assembly, the VTC core complex is an integral membrane heterooligomer composed of at least the catalytic subunit vtc4 and the accessory subunits vtc1 and vtc2. vtc1 is a small membrane protein without hydrophilic domain. Vtc2 and vtc4 are related and have 2 hydrophilic domains that face the cytosol, an N-terminal SPX domain and the central core domain. The central core in vtc4 is the catalytic domain. Mn(2+) serves as cofactor.

The protein localises to the vacuole membrane. It catalyses the reaction [phosphate](n) + ATP = [phosphate](n+1) + ADP. Activity of the enzyme is Mn(2+)-dependent and enhanced in the presence of pyrophosphate (PPi). Its function is as follows. Catalytic subunit of the vacuolar transporter chaperone (VTC) complex. The VTC complex acts as a vacuolar polyphosphate polymerase that catalyzes the synthesis of inorganic polyphosphate (polyP) via transfer of phosphate from ATP to a growing polyP chain, releasing ADP. VTC exposes its catalytic domain vtc4 to the cytosol, where the growing polyP chain winds through a tunnel-shaped pocket, integrating cytoplasmic polymer synthesis with polyP membrane translocation. The VTC complex carries 9 vacuolar transmembrane domains, which are likely to constitute the translocation channel into the organelle lumen. PolyP synthesis is tightly coupled to its transport into the vacuole lumen, in order to avoid otherwise toxic intermediates in the cytosol, and it depends on the proton gradient across the membrane, formed by V-ATPase. The VTC complex also plays a role in vacuolar membrane fusion. This Schizosaccharomyces pombe (strain 972 / ATCC 24843) (Fission yeast) protein is Vacuolar transporter chaperone complex subunit 4 (vtc4).